The chain runs to 319 residues: Lipoyl synthase (319 aa).

The tract at residues 6–29 is disordered; the sequence is DTVSANPVRPRHPEKAARPDALSP. Residues 16-29 are compositionally biased toward basic and acidic residues; that stretch reads RHPEKAARPDALSP. Residues Cys61, Cys66, Cys72, Cys87, Cys91, Cys94, and Ser300 each contribute to the [4Fe-4S] cluster site. The 217-residue stretch at 73-289 folds into the Radical SAM core domain; sequence WDKKHATFMI…QTTAYAKGFL (217 aa).

Belongs to the radical SAM superfamily. Lipoyl synthase family. It depends on [4Fe-4S] cluster as a cofactor.

It localises to the cytoplasm. The enzyme catalyses [[Fe-S] cluster scaffold protein carrying a second [4Fe-4S](2+) cluster] + N(6)-octanoyl-L-lysyl-[protein] + 2 oxidized [2Fe-2S]-[ferredoxin] + 2 S-adenosyl-L-methionine + 4 H(+) = [[Fe-S] cluster scaffold protein] + N(6)-[(R)-dihydrolipoyl]-L-lysyl-[protein] + 4 Fe(3+) + 2 hydrogen sulfide + 2 5'-deoxyadenosine + 2 L-methionine + 2 reduced [2Fe-2S]-[ferredoxin]. Its pathway is protein modification; protein lipoylation via endogenous pathway; protein N(6)-(lipoyl)lysine from octanoyl-[acyl-carrier-protein]: step 2/2. Catalyzes the radical-mediated insertion of two sulfur atoms into the C-6 and C-8 positions of the octanoyl moiety bound to the lipoyl domains of lipoate-dependent enzymes, thereby converting the octanoylated domains into lipoylated derivatives. This Rhodopseudomonas palustris (strain ATCC BAA-98 / CGA009) protein is Lipoyl synthase.